A 227-amino-acid chain; its full sequence is MAYPFQLGLQDATSPIMEELTNFHDHTLMIVFLISSLVLYIISLMLTTKLTHTNTMDAQEVETIWTILPAVILILIALPSLRILYMMDEINNPALTVKTMGHQWYWSYEYTDYEDLCFDSYMIPTNDLKPGELRLLEVDNRVVLPMELPIRMLVSSEDVLHSWAVPSLGLKTDAIPGRLNQATVTSNRPGLFYGQCSEICGSNHSFMPIVLEMVPLKHFENWSASMI.

The Mitochondrial intermembrane portion of the chain corresponds to Met1–Ser14. Residues Pro15–Met45 traverse the membrane as a helical segment. Topologically, residues Leu46–Gln59 are mitochondrial matrix. Residues Glu60 to Met87 traverse the membrane as a helical segment. The Mitochondrial intermembrane segment spans residues Asp88–Ile227. 6 residues coordinate Cu cation: His161, Cys196, Glu198, Cys200, His204, and Met207. Residue Glu198 coordinates Mg(2+).

This sequence belongs to the cytochrome c oxidase subunit 2 family. Component of the cytochrome c oxidase (complex IV, CIV), a multisubunit enzyme composed of 14 subunits. The complex is composed of a catalytic core of 3 subunits MT-CO1, MT-CO2 and MT-CO3, encoded in the mitochondrial DNA, and 11 supernumerary subunits COX4I, COX5A, COX5B, COX6A, COX6B, COX6C, COX7A, COX7B, COX7C, COX8 and NDUFA4, which are encoded in the nuclear genome. The complex exists as a monomer or a dimer and forms supercomplexes (SCs) in the inner mitochondrial membrane with NADH-ubiquinone oxidoreductase (complex I, CI) and ubiquinol-cytochrome c oxidoreductase (cytochrome b-c1 complex, complex III, CIII), resulting in different assemblies (supercomplex SCI(1)III(2)IV(1) and megacomplex MCI(2)III(2)IV(2)). Found in a complex with TMEM177, COA6, COX18, COX20, SCO1 and SCO2. Interacts with TMEM177 in a COX20-dependent manner. Interacts with COX20. Interacts with COX16. Cu cation serves as cofactor.

It localises to the mitochondrion inner membrane. The enzyme catalyses 4 Fe(II)-[cytochrome c] + O2 + 8 H(+)(in) = 4 Fe(III)-[cytochrome c] + 2 H2O + 4 H(+)(out). Component of the cytochrome c oxidase, the last enzyme in the mitochondrial electron transport chain which drives oxidative phosphorylation. The respiratory chain contains 3 multisubunit complexes succinate dehydrogenase (complex II, CII), ubiquinol-cytochrome c oxidoreductase (cytochrome b-c1 complex, complex III, CIII) and cytochrome c oxidase (complex IV, CIV), that cooperate to transfer electrons derived from NADH and succinate to molecular oxygen, creating an electrochemical gradient over the inner membrane that drives transmembrane transport and the ATP synthase. Cytochrome c oxidase is the component of the respiratory chain that catalyzes the reduction of oxygen to water. Electrons originating from reduced cytochrome c in the intermembrane space (IMS) are transferred via the dinuclear copper A center (CU(A)) of subunit 2 and heme A of subunit 1 to the active site in subunit 1, a binuclear center (BNC) formed by heme A3 and copper B (CU(B)). The BNC reduces molecular oxygen to 2 water molecules using 4 electrons from cytochrome c in the IMS and 4 protons from the mitochondrial matrix. This Sundamys muelleri (Mueller's giant sunda rat) protein is Cytochrome c oxidase subunit 2 (MT-CO2).